The primary structure comprises 671 residues: Acetyl-coenzyme A synthetase (671 aa).

Residues 1-21 (MPTASASESSSNQPESSNASG) form a disordered region. Residues 221-224 (RRGK), T339, and N363 contribute to the CoA site. Residues 415 to 417 (GEG), 439 to 444 (DTWWQT), D528, and R543 each bind ATP. Position 551 (S551) interacts with CoA. Residue R554 coordinates ATP. Mg(2+) contacts are provided by V565, H567, and V570. R611 provides a ligand contact to CoA. K636 bears the N6-acetyllysine mark.

Belongs to the ATP-dependent AMP-binding enzyme family. Requires Mg(2+) as cofactor. In terms of processing, acetylated. Deacetylation by the SIR2-homolog deacetylase activates the enzyme.

It carries out the reaction acetate + ATP + CoA = acetyl-CoA + AMP + diphosphate. Functionally, catalyzes the conversion of acetate into acetyl-CoA (AcCoA), an essential intermediate at the junction of anabolic and catabolic pathways. AcsA undergoes a two-step reaction. In the first half reaction, AcsA combines acetate with ATP to form acetyl-adenylate (AcAMP) intermediate. In the second half reaction, it can then transfer the acetyl group from AcAMP to the sulfhydryl group of CoA, forming the product AcCoA. The polypeptide is Acetyl-coenzyme A synthetase (Rhodopirellula baltica (strain DSM 10527 / NCIMB 13988 / SH1)).